A 1241-amino-acid chain; its full sequence is MIENWPKKPEGSQWTDDQWKAVVANGRDILVAAAAGSGKTAVLVERIIKKIINEENPVDVDRLLVVTFTNAAAQEMKNRIGEALEKVLIDEPGSQHVRKQLSLLNKASISTIHSFCLQVIRGYYYMLDVDPRFRIANQTENELLKEEVLDDILEEEYGIEDNTIFFELVDRYTSDRSDDDLQRMILALHTESRAHPNPEKWLDKLVEAYDVEGKTIEDLVYASYLLEDVKFQLETAEQHIRKATELAMLPDGPAPRIETLQADLALLGTLSSAAHESWTSLYEAMQNVSWQTLKRIKKSDYNEDVVKQVDSLRNKAKDEVKKLQEELFSRKPESFLRDFQDMHPVLEKLVQLVKVFTERFQAMKRDKGMVDFTDLEHFCLQILSEQSENGEMNPSAVALQYRNKFAEVLVDEYQDTNFVQESIIKFVTKDSESEGNLFMVGDVKQSIYRFRLAEPGLFLGKYKRFTQEGLGGGMKIDLAKNFRSRHEVLAGTNFIFKQIMGEEVGEIDYDADAELKLGATYPEGEDVAAELLCIQQTEEEVIDGEEGAEVEKAQLEARLMAQRIKAMVDSGYEVYDRKNDSMRPVQYRDFVILLRSMPWAPQIMEELKLQGIPVYADLATGYFEATEVNIMMNVFRVIDNPMQDIPLAAVLRSPIVGLSDEELATLRAHGKKGSFYEVMSSFLKGAPLEEEQELHDKLEWFYNLLQGWREFARQQSLSDLIWKVYGETGYYDFVGGLPAGKQRQANLRVLYDRARQYEATSFRGLFRFLRFIERILERGDDMGTARALGEQEDVVRIMTIHKSKGLEFPVVFVAGLGRRFNTQDLMKRFLLHKDFGFGSQFIDPRKRIKYTTLSQLAIKRKMKMELIAEEMRVLYVALTRAKEKLILIGTVKDANKEMEKWLDAREHSEWLLPDHIRAGASCYLDWIAPSLYRHRDSEMLLELGQGSIPDEIYGYDTSWKVEVVDGNTLLAPEPVQEEKQELLEALREKKAVPLESERKDEVYDRLMWKYGYEEATSHRAKQSVTEIKRNYQSEDGSDNAFIKKLRAPIKTRPRFMEKKGLTYAERGTAVHAVMQHVDLKKPITVEVLQEQIAGMVNKELLTFEQAEEIAIEKVISFFDSDLGKKVLAAKSVEREVPFTMMLAAEEAYQDWQGNSGESILVQGVIDCMIEEEDGITLIDFKTDTIEGKFPGGFEQAKPILEDRYKVQLSLYAKALEKSLQHPVKEKCLYFFDGNHVVNIEE.

The 474-residue stretch at 12–485 (SQWTDDQWKA…IDLAKNFRSR (474 aa)) folds into the UvrD-like helicase ATP-binding domain. 33–40 (AAAGSGKT) contacts ATP. Residues 505–805 (GEIDYDADAE…RIMTIHKSKG (301 aa)) form the UvrD-like helicase C-terminal domain.

It belongs to the helicase family. AddA subfamily. In terms of assembly, heterodimer of AddA and AddB/RexB. Mg(2+) is required as a cofactor.

It catalyses the reaction Couples ATP hydrolysis with the unwinding of duplex DNA by translocating in the 3'-5' direction.. The catalysed reaction is ATP + H2O = ADP + phosphate + H(+). Functionally, the heterodimer acts as both an ATP-dependent DNA helicase and an ATP-dependent, dual-direction single-stranded exonuclease. Recognizes the chi site generating a DNA molecule suitable for the initiation of homologous recombination. The AddA nuclease domain is required for chi fragment generation; this subunit has the helicase and 3' -&gt; 5' nuclease activities. This chain is ATP-dependent helicase/nuclease subunit A, found in Bacillus cereus (strain B4264).